A 276-amino-acid chain; its full sequence is NADPH-dependent 7-cyano-7-deazaguanine reductase (276 aa).

A substrate-binding site is contributed by 83-85 (IES). 85-86 (SK) lines the NADPH pocket. Cysteine 184 acts as the Thioimide intermediate in catalysis. The Proton donor role is filled by aspartate 191. 223 to 224 (HE) provides a ligand contact to substrate. Position 252–253 (252–253 (RG)) interacts with NADPH.

It belongs to the GTP cyclohydrolase I family. QueF type 2 subfamily. In terms of assembly, homodimer.

It localises to the cytoplasm. It carries out the reaction 7-aminomethyl-7-carbaguanine + 2 NADP(+) = 7-cyano-7-deazaguanine + 2 NADPH + 3 H(+). It functions in the pathway tRNA modification; tRNA-queuosine biosynthesis. Functionally, catalyzes the NADPH-dependent reduction of 7-cyano-7-deazaguanine (preQ0) to 7-aminomethyl-7-deazaguanine (preQ1). This Pseudomonas entomophila (strain L48) protein is NADPH-dependent 7-cyano-7-deazaguanine reductase.